The chain runs to 190 residues: Peptidyl-prolyl cis-trans isomerase FKBP20-1 (190 aa).

Position 2 is an N-acetylglycine (Gly-2). The region spanning 32–121 (LPVVDVHYEG…IFEVELVACR (90 aa)) is the PPIase FKBP-type domain. The span at 149 to 163 (AAAKEDDKKKREEAK) shows a compositional bias: basic and acidic residues. The disordered stretch occupies residues 149-190 (AAAKEDDKKKREEAKAAAAARIQAKLDAKKGPGKGKGKGKAK). Residues 179 to 190 (GPGKGKGKGKAK) show a composition bias toward basic residues.

This sequence belongs to the FKBP-type PPIase family.

The enzyme catalyses [protein]-peptidylproline (omega=180) = [protein]-peptidylproline (omega=0). Its function is as follows. PPIases accelerate the folding of proteins. It catalyzes the cis-trans isomerization of proline imidic peptide bonds in oligopeptides. The protein is Peptidyl-prolyl cis-trans isomerase FKBP20-1 (FKBP20-1) of Arabidopsis thaliana (Mouse-ear cress).